A 493-amino-acid polypeptide reads, in one-letter code: Putative BTB/POZ domain-containing protein L35 (493 aa).

Residues 16–87 enclose the BTB domain; that stretch reads TDLKLTLVDD…YLVDNKSEVD (72 aa).

The protein belongs to the mimivirus BTB/WD family.

In Acanthamoeba polyphaga (Amoeba), this protein is Putative BTB/POZ domain-containing protein L35.